A 194-amino-acid chain; its full sequence is ATP-dependent Clp protease proteolytic subunit (194 aa).

The Nucleophile role is filled by serine 97. Residue histidine 122 is part of the active site.

Belongs to the peptidase S14 family. As to quaternary structure, fourteen ClpP subunits assemble into 2 heptameric rings which stack back to back to give a disk-like structure with a central cavity, resembling the structure of eukaryotic proteasomes.

The protein localises to the cytoplasm. It carries out the reaction Hydrolysis of proteins to small peptides in the presence of ATP and magnesium. alpha-casein is the usual test substrate. In the absence of ATP, only oligopeptides shorter than five residues are hydrolyzed (such as succinyl-Leu-Tyr-|-NHMec, and Leu-Tyr-Leu-|-Tyr-Trp, in which cleavage of the -Tyr-|-Leu- and -Tyr-|-Trp bonds also occurs).. Its function is as follows. Cleaves peptides in various proteins in a process that requires ATP hydrolysis. Has a chymotrypsin-like activity. Plays a major role in the degradation of misfolded proteins. This chain is ATP-dependent Clp protease proteolytic subunit, found in Carsonella ruddii (strain PV).